Here is a 376-residue protein sequence, read N- to C-terminus: uncharacterized protein (376 aa).

Residues 24-44 (YLSIISIISVFLLNSSIVYSC) traverse the membrane as a helical segment. H251 contributes to the Zn(2+) binding site.

It belongs to the peptidase M23B family. Zn(2+) serves as cofactor.

It is found in the cell membrane. This is an uncharacterized protein from Buchnera aphidicola subsp. Baizongia pistaciae (strain Bp).